The primary structure comprises 240 residues: REF/SRPP-like protein At1g67360 (240 aa).

Residues 208–240 (KEDARRKKGGDTAGKKGETTDAADGDKSSSDSE) form a disordered region.

This sequence belongs to the REF/SRPP family.

This is REF/SRPP-like protein At1g67360 from Arabidopsis thaliana (Mouse-ear cress).